Consider the following 782-residue polypeptide: Probable cyclic di-GMP phosphodiesterase PdeI (782 aa).

The next 2 helical transmembrane spans lie at 12-32 (LIIL…IINY) and 286-306 (LFYL…LMTT). The 255-residue stretch at 527-781 (NIWIARNIRH…AWDKSGKLVK (255 aa)) folds into the EAL domain.

The protein resides in the cell membrane. It catalyses the reaction 3',3'-c-di-GMP + H2O = 5'-phosphoguanylyl(3'-&gt;5')guanosine + H(+). In terms of biological role, phosphodiesterase (PDE) that catalyzes the hydrolysis of cyclic-di-GMP (c-di-GMP) to 5'-pGpG. Overexpression reduces biofilm formation. Cyclic-di-GMP is a second messenger which controls cell surface-associated traits in bacteria. This is Probable cyclic di-GMP phosphodiesterase PdeI from Escherichia coli (strain K12).